The chain runs to 342 residues: Endoplasmic reticulum junction formation protein lunapark-1 (342 aa).

Topologically, residues 1–39 (MGNLFSRNKSPATELERVALSIDDLKKRLQTISSSNTNT) are cytoplasmic. Residues 13-34 (TELERVALSIDDLKKRLQTISS) adopt a coiled-coil conformation. Residues 40–60 (LYYYYMSIVVILSIAMAHTWL) traverse the membrane as a helical segment. Residues 61–68 (RFEDPQKT) lie on the Lumenal side of the membrane. The helical transmembrane segment at 69-89 (YVACALMLGAIGIVLAGRYVI) threads the bilayer. Residues 90–342 (NGFFSWRTNR…ESKTMETEFH (253 aa)) are Cytoplasmic-facing. Residues 102-136 (QKLENAISQKTTLLDLVKETLKFKEAKEILDRYEK) adopt a coiled-coil conformation. A disordered region spans residues 161–191 (ADSSMFATPKQEQKRVETPTAQGPNSAMNSM). Over residues 179–191 (PTAQGPNSAMNSM) the composition is skewed to polar residues. Residues 236 to 261 (CSICHTHNGMSTPAEYPYISFRCFEC) form a C4-type; plays a role in ER morphology zinc finger. Positions 278-342 (RPPMGPKGIQ…ESKTMETEFH (65 aa)) are disordered. Residues 295–321 (SENTHNMMENQKPSTDLTPSASQNGSE) are compositionally biased toward polar residues. Residues 322-342 (KGSDSENEKVPESKTMETEFH) show a composition bias toward basic and acidic residues.

It belongs to the lunapark family. As to expression, expressed in cell bodies along the ventral cord around the pharynx and the tail both in larvae and adults. Also expressed in muscles and hypodermal cells.

It localises to the endoplasmic reticulum membrane. Its function is as follows. Plays a role in tubular endoplasmic reticulum network formation and maintenance. May be involved in central nervous system development. Has a presynaptic role in neurotransmission. Likely to operate in synaptogenesis by regulating vesicular transport or localization. Required for correct localization of rab-3 and snb-1. The sequence is that of Endoplasmic reticulum junction formation protein lunapark-1 (lnp-1) from Caenorhabditis elegans.